Reading from the N-terminus, the 187-residue chain is Large ribosomal subunit protein uL22B (187 aa).

The protein belongs to the universal ribosomal protein uL22 family. As to quaternary structure, component of the large ribosomal subunit (LSU). Mature yeast ribosomes consist of a small (40S) and a large (60S) subunit. The 40S small subunit contains 1 molecule of ribosomal RNA (18S rRNA) and at least 33 different proteins. The large 60S subunit contains 3 rRNA molecules (25S, 5.8S and 5S rRNA) and at least 46 different proteins. uL22 is associated with the polypeptide exit tunnel.

Its subcellular location is the cytoplasm. Component of the ribosome, a large ribonucleoprotein complex responsible for the synthesis of proteins in the cell. The small ribosomal subunit (SSU) binds messenger RNAs (mRNAs) and translates the encoded message by selecting cognate aminoacyl-transfer RNA (tRNA) molecules. The large subunit (LSU) contains the ribosomal catalytic site termed the peptidyl transferase center (PTC), which catalyzes the formation of peptide bonds, thereby polymerizing the amino acids delivered by tRNAs into a polypeptide chain. The nascent polypeptides leave the ribosome through a tunnel in the LSU and interact with protein factors that function in enzymatic processing, targeting, and the membrane insertion of nascent chains at the exit of the ribosomal tunnel. This chain is Large ribosomal subunit protein uL22B (rpl1702), found in Schizosaccharomyces pombe (strain 972 / ATCC 24843) (Fission yeast).